An 87-amino-acid polypeptide reads, in one-letter code: Pro-gurmarin (87 aa).

Positions 1 to 20 (MAKFAAIVLLILVASATVNA) are cleaved as a signal peptide. Positions 21–52 (VKEHDELPTTGMSRKILLQPVFKSLIISIAEG) are excised as a propeptide. A Pyrrolidone carboxylic acid modification is found at Gln53. Disulfide bonds link Cys55–Cys70, Cys62–Cys75, and Cys69–Cys85.

As to expression, expressed in leaves (at protein level).

Peptide that strongly, but reversibly, suppresses the sweet taste-response to various sweeteners, including sugars, sweet amino acids and the artificial sweetener saccharin. In rodents, potentially binds to a sweet taste receptor present on apical microvilli of a subset of taste bud cells. Highly effective at blocking the sweet taste-response in rodents such as rats and mice, though mice may possess a mix of gurmarin-sensitive and -insensitive receptors. Has almost no effect on the sweet taste-response in humans. Inhibits Staphylococcus aureus biofilm formation without affecting bacterial viability. May be one of at least 9 different disulfide-rich peptides produced with varying properties. In Gymnema sylvestre (Gurmar), this protein is Pro-gurmarin.